Consider the following 925-residue polypeptide: TBC1 domain family member 2A (925 aa).

Met1 bears the N-acetylmethionine mark. The tract at residues 1–41 (MEGAQESPAESGSSVPWSEEPAGSAKVPEVSLSEESEGCTR) is disordered. The tract at residues 1 to 171 (MEGAQESPAE…AGNGPALRLE (171 aa)) is interaction with CADH1. Residues 47–144 (PPKLCGYLSK…WLQQLQMKRW (98 aa)) form the PH domain. The segment at 231–278 (NKQTQGANHRPPGEDSPLIEETQREEQPSPPGPGAPGKDPANSLKSSL) is disordered. The interaction with RAC1 stretch occupies residues 297–435 (SEGLMRNRTA…KVTQDFMKAP (139 aa)). Residues 302-475 (RNRTAQEKVL…LNSEIHQVTK (174 aa)) adopt a coiled-coil conformation. Positions 622–814 (GVPHEHRPRV…QVWDAFLYEG (193 aa)) constitute a Rab-GAP TBC domain. A coiled-coil region spans residues 872–907 (MKQLRQLRAAHRERLEAELNELEQLKAEYLETRAAQ). A disordered region spans residues 904–925 (RAAQGPAVPEGSPSEDEGEAEP). Over residues 916 to 925 (PSEDEGEAEP) the composition is skewed to acidic residues. Ser917 is modified (phosphoserine).

As to quaternary structure, interacts with activated RAC1 and CDH1.

It localises to the cytoplasm. Its subcellular location is the cytoplasmic vesicle. It is found in the cell junction. Its function is as follows. May act as a GTPase-activating protein for Rab family protein(s). Signal effector acting as a linker between RAC1 and RAB7A, leading to RAB7A inactivation and further inhibition of cadherin degradation. This is TBC1 domain family member 2A (TBC1D2) from Bos taurus (Bovine).